The following is a 183-amino-acid chain: Peptide deformylase (183 aa).

Residues Cys-111 and His-154 each contribute to the Fe cation site. Glu-155 is an active-site residue. His-158 is a binding site for Fe cation.

The cofactor is Fe(2+).

It carries out the reaction N-terminal N-formyl-L-methionyl-[peptide] + H2O = N-terminal L-methionyl-[peptide] + formate. In terms of biological role, removes the formyl group from the N-terminal Met of newly synthesized proteins. Requires at least a dipeptide for an efficient rate of reaction. N-terminal L-methionine is a prerequisite for activity but the enzyme has broad specificity at other positions. The chain is Peptide deformylase from Staphylococcus aureus.